Here is a 134-residue protein sequence, read N- to C-terminus: Small ribosomal subunit protein uS9 (134 aa).

A disordered region spans residues 109–134; the sequence is DARRTEPHKPSKSTKGPRAKRQKSYR. Over residues 118–134 the composition is skewed to basic residues; the sequence is PSKSTKGPRAKRQKSYR.

The protein belongs to the universal ribosomal protein uS9 family.

The chain is Small ribosomal subunit protein uS9 from Methanococcus aeolicus (strain ATCC BAA-1280 / DSM 17508 / OCM 812 / Nankai-3).